The primary structure comprises 443 residues: Ribulose bisphosphate carboxylase large chain (443 aa).

N6,N6,N6-trimethyllysine is present on lysine 3. Substrate is bound by residues asparagine 112 and threonine 162. The active-site Proton acceptor is the lysine 164. Lysine 166 serves as a coordination point for substrate. Mg(2+)-binding residues include lysine 190, aspartate 192, and glutamate 193. The residue at position 190 (lysine 190) is an N6-carboxylysine. Histidine 283 functions as the Proton acceptor in the catalytic mechanism. Arginine 284, histidine 316, and serine 368 together coordinate substrate.

Belongs to the RuBisCO large chain family. Type I subfamily. In terms of assembly, heterohexadecamer of 8 large chains and 8 small chains; disulfide-linked. The disulfide link is formed within the large subunit homodimers. The cofactor is Mg(2+). Post-translationally, the disulfide bond which can form in the large chain dimeric partners within the hexadecamer appears to be associated with oxidative stress and protein turnover.

Its subcellular location is the plastid. It is found in the chloroplast. The enzyme catalyses 2 (2R)-3-phosphoglycerate + 2 H(+) = D-ribulose 1,5-bisphosphate + CO2 + H2O. It catalyses the reaction D-ribulose 1,5-bisphosphate + O2 = 2-phosphoglycolate + (2R)-3-phosphoglycerate + 2 H(+). RuBisCO catalyzes two reactions: the carboxylation of D-ribulose 1,5-bisphosphate, the primary event in carbon dioxide fixation, as well as the oxidative fragmentation of the pentose substrate in the photorespiration process. Both reactions occur simultaneously and in competition at the same active site. The protein is Ribulose bisphosphate carboxylase large chain of Iris germanica (Bearded iris).